The following is a 637-amino-acid chain: Chaperone protein HtpG (637 aa).

Residues 1–348 (MAEAGQMEKH…SNDLPLNVSR (348 aa)) are a; substrate-binding. The b stretch occupies residues 349–565 (EILQDNKITR…DNDMSTQMAK (217 aa)). The interval 566-637 (LMEAAGQAVP…TRLNKLMLNA (72 aa)) is c.

It belongs to the heat shock protein 90 family. As to quaternary structure, homodimer.

Its subcellular location is the cytoplasm. Molecular chaperone. Has ATPase activity. The chain is Chaperone protein HtpG from Idiomarina loihiensis (strain ATCC BAA-735 / DSM 15497 / L2-TR).